The chain runs to 409 residues: LysM domain-containing GPI-anchored protein LYP6 (409 aa).

Positions 1-27 (MAGWPAAEAAGALVVAILAAAAGGAAG) are cleaved as a signal peptide. 4 disulfide bridges follow: cysteine 34–cysteine 100, cysteine 40–cysteine 166, cysteine 98–cysteine 164, and cysteine 100–cysteine 166. A LysM 1 domain is found at 110-160 (VRYSARPADTLASVADVVFAGLASADQIRTANGLSAEDPDAPLDAGATLVV). A glycan (N-linked (GlcNAc...) asparagine) is linked at asparagine 168. Residues 179 to 222 (LSYVVRVGDTVQSIAATHATTVTDISNVNAMGSPIVAPGDILAI) enclose the LysM 2 domain. Cystine bridges form between cysteine 227-cysteine 259 and cysteine 254-cysteine 282. An N-linked (GlcNAc...) asparagine glycan is attached at asparagine 244. Residues asparagine 291, asparagine 302, and asparagine 313 are each glycosylated (N-linked (GlcNAc...) asparagine). The disordered stretch occupies residues 353 to 387 (SPAPGAGEAGGDIPGFPGSSNVSPANGPSGSVSQA). The segment covering 370–387 (GSSNVSPANGPSGSVSQA) has biased composition (polar residues). Residue alanine 387 is the site of GPI-anchor amidated alanine attachment. Positions 388–409 (ASVNRPHQIVALILSVALYFQM) are cleaved as a propeptide — removed in mature form.

As to quaternary structure, interacts with LYP4. Interacts with CERK1. Interacts with CEBIP. In terms of tissue distribution, expressed in roots and leaves.

It is found in the cell membrane. In terms of biological role, functions in innate immunity. Functions as a pattern recognition receptor (PRR), sensing bacterial peptidoglycan (PGN) and fungal chitin at the cell surface. Involved in resistance against the bacterial pathogen Xanthomonas oryzae pv. oryzae (Xoo) and the fungal pathogen Magnaporthe oryzae. Binds PGN and fungal chitin in vitro. Involved in microbe-associated molecular patterns (MAMPs) perception and participates in the activation of defense genes against the bacterial pathogen Xanthomonas oryzae pv. oryzicola (Xoc) or the fungal pathogen Magnaporthe oryzae. This Oryza sativa subsp. japonica (Rice) protein is LysM domain-containing GPI-anchored protein LYP6.